The chain runs to 178 residues: ATP-dependent protease subunit HslV (178 aa).

T7 is a catalytic residue. The Na(+) site is built by G162, C165, and T168.

The protein belongs to the peptidase T1B family. HslV subfamily. A double ring-shaped homohexamer of HslV is capped on each side by a ring-shaped HslU homohexamer. The assembly of the HslU/HslV complex is dependent on binding of ATP.

It localises to the cytoplasm. It carries out the reaction ATP-dependent cleavage of peptide bonds with broad specificity.. Its activity is regulated as follows. Allosterically activated by HslU binding. In terms of biological role, protease subunit of a proteasome-like degradation complex believed to be a general protein degrading machinery. The chain is ATP-dependent protease subunit HslV from Burkholderia mallei (strain ATCC 23344).